We begin with the raw amino-acid sequence, 265 residues long: 4-hydroxy-tetrahydrodipicolinate reductase (265 aa).

Residues 7–12 (GASGRM), aspartate 33, 96–98 (GTT), and 120–123 (AANF) contribute to the NAD(+) site. Histidine 153 functions as the Proton donor/acceptor in the catalytic mechanism. A (S)-2,3,4,5-tetrahydrodipicolinate-binding site is contributed by histidine 154. Lysine 157 (proton donor) is an active-site residue. 163-164 (GT) is a binding site for (S)-2,3,4,5-tetrahydrodipicolinate.

Belongs to the DapB family.

It is found in the cytoplasm. The enzyme catalyses (S)-2,3,4,5-tetrahydrodipicolinate + NAD(+) + H2O = (2S,4S)-4-hydroxy-2,3,4,5-tetrahydrodipicolinate + NADH + H(+). It catalyses the reaction (S)-2,3,4,5-tetrahydrodipicolinate + NADP(+) + H2O = (2S,4S)-4-hydroxy-2,3,4,5-tetrahydrodipicolinate + NADPH + H(+). The protein operates within amino-acid biosynthesis; L-lysine biosynthesis via DAP pathway; (S)-tetrahydrodipicolinate from L-aspartate: step 4/4. Functionally, catalyzes the conversion of 4-hydroxy-tetrahydrodipicolinate (HTPA) to tetrahydrodipicolinate. This is 4-hydroxy-tetrahydrodipicolinate reductase from Cupriavidus taiwanensis (strain DSM 17343 / BCRC 17206 / CCUG 44338 / CIP 107171 / LMG 19424 / R1) (Ralstonia taiwanensis (strain LMG 19424)).